Reading from the N-terminus, the 181-residue chain is ATP-dependent protease subunit HslV (181 aa).

Threonine 7 is a catalytic residue. Alanine 166, cysteine 169, and threonine 172 together coordinate Na(+).

This sequence belongs to the peptidase T1B family. HslV subfamily. As to quaternary structure, a double ring-shaped homohexamer of HslV is capped on each side by a ring-shaped HslU homohexamer. The assembly of the HslU/HslV complex is dependent on binding of ATP.

It is found in the cytoplasm. It catalyses the reaction ATP-dependent cleavage of peptide bonds with broad specificity.. Allosterically activated by HslU binding. Its function is as follows. Protease subunit of a proteasome-like degradation complex believed to be a general protein degrading machinery. The polypeptide is ATP-dependent protease subunit HslV (Anaeromyxobacter sp. (strain Fw109-5)).